A 104-amino-acid chain; its full sequence is Small ribosomal subunit protein uS10 (104 aa).

It belongs to the universal ribosomal protein uS10 family. In terms of assembly, part of the 30S ribosomal subunit.

Its function is as follows. Involved in the binding of tRNA to the ribosomes. The protein is Small ribosomal subunit protein uS10 of Xanthomonas oryzae pv. oryzae (strain MAFF 311018).